Consider the following 541-residue polypeptide: Protein ST7 homolog (541 aa).

Residues 15–35 (FYVALTGTSSLISGLILIFEW) form a helical membrane-spanning segment. A disordered region spans residues 62–116 (DAQSDSSNGSGSSTSSGSSSSSNGGGGGGGGGAGGGGPGAGGGTNSTTTTGTQMP). Over residues 67–83 (SSNGSGSSTSSGSSSSS) the composition is skewed to low complexity. The segment covering 84–105 (NGGGGGGGGGAGGGGPGAGGGT) has biased composition (gly residues). The chain crosses the membrane as a helical span at residues 476 to 496 (LPFFILFTAGLCSFTALLALL).

The protein belongs to the ST7 family.

It localises to the membrane. This Drosophila pseudoobscura pseudoobscura (Fruit fly) protein is Protein ST7 homolog.